Consider the following 68-residue polypeptide: MAKVKMKTNKTAAKRFKVTAKGKIKYWKGGVSHYNTKKSSKRKRQGRKADYVPENIADRVKQLIPYQV.

It belongs to the bacterial ribosomal protein bL35 family.

This Persephonella marina (strain DSM 14350 / EX-H1) protein is Large ribosomal subunit protein bL35.